The sequence spans 282 residues: Putative peroxisomal biogenesis factor 19 (282 aa).

A disordered region spans residues 73 to 95 (QEEAMKKAGADPSEGEGEQPLDP). Cys-279 is modified (cysteine methyl ester). Cys-279 is lipidated: S-farnesyl cysteine. The propeptide at 280–282 (SIM) is removed in mature form.

The protein belongs to the peroxin-19 family.

It is found in the peroxisome. This chain is Putative peroxisomal biogenesis factor 19 (prx-19), found in Caenorhabditis elegans.